A 454-amino-acid chain; its full sequence is MFDLDKFWQFFNAEMKKSYSTVAYNAWFKNTKPISFNKKTKEMIIAVESPVAKGYWEKNLASQLIQEAYAYADMEIQPKFEVAGKEGPERLVTPQPRIKTNQEILENRRDEFAQDLQLNSKYTFDTFVQGEGNKLAAGAALAVADNPGSFYNPLFIFGGVGLGKTHLMQAIGHQMLAEKPHAKVVYIQSETFVNDFINSIKNKTQAEFRNKYRNCDLLLVDDIQFFSKKEGIQEEFFHTFETLYNDQKQIVMTSDRLPTEIPELSERLVSRFAWGLQVEITPPDLETRIAILRKKAETDGLAIDDSTLDYIASQVDTNIRELEGALVKVQAHATIEREDINVDLAKEALADLKLVQKNRGLQISKIQEVVANYFQTSTTELKGKKRVKQIVVPRQIAMYLSRELTDSSLPKIGQEFGGKDHTTVMHACDKISRALKTDAEIKAAVYDLKAMLEH.

A domain I, interacts with DnaA modulators region spans residues 1–74 (MFDLDKFWQF…IQEAYAYADM (74 aa)). The segment at 74 to 116 (MEIQPKFEVAGKEGPERLVTPQPRIKTNQEILENRRDEFAQDL) is domain II. The interval 117-333 (QLNSKYTFDT…GALVKVQAHA (217 aa)) is domain III, AAA+ region. Glycine 161, glycine 163, lysine 164, and threonine 165 together coordinate ATP. Residues 334-454 (TIEREDINVD…VYDLKAMLEH (121 aa)) form a domain IV, binds dsDNA region.

It belongs to the DnaA family. As to quaternary structure, oligomerizes as a right-handed, spiral filament on DNA at oriC.

Its subcellular location is the cytoplasm. Plays an essential role in the initiation and regulation of chromosomal replication. ATP-DnaA binds to the origin of replication (oriC) to initiate formation of the DNA replication initiation complex once per cell cycle. Binds the DnaA box (a 9 base pair repeat at the origin) and separates the double-stranded (ds)DNA. Forms a right-handed helical filament on oriC DNA; dsDNA binds to the exterior of the filament while single-stranded (ss)DNA is stabiized in the filament's interior. The ATP-DnaA-oriC complex binds and stabilizes one strand of the AT-rich DNA unwinding element (DUE), permitting loading of DNA polymerase. After initiation quickly degrades to an ADP-DnaA complex that is not apt for DNA replication. Binds acidic phospholipids. The polypeptide is Chromosomal replication initiator protein DnaA (Lactobacillus johnsonii (strain CNCM I-12250 / La1 / NCC 533)).